Here is a 134-residue protein sequence, read N- to C-terminus: MSWQAYVDDHLMCDIEGHEGHRLTAAAIVGHDGSVWAQSATFPQFKPEEMNGIMTDFNEPGHLAPTGLHLGGTKYMVIQGEAGAVIRGKKGSGGITIKKTGQAVVCGIYEEPVTPGQCNMVVERLGDYLIEQGL.

Cys13 and Cys118 are joined by a disulfide. An Involved in PIP2 interaction motif is present at residues 84 to 100; it reads AVIRGKKGSGGITIKKT. Thr114 carries the phosphothreonine modification.

The protein belongs to the profilin family. As to quaternary structure, occurs in many kinds of cells as a complex with monomeric actin in a 1:1 ratio. Phosphorylated by MAP kinases.

It localises to the cytoplasm. It is found in the cytoskeleton. Binds to actin and affects the structure of the cytoskeleton. At high concentrations, profilin prevents the polymerization of actin, whereas it enhances it at low concentrations. The sequence is that of Profilin-2 from Olea europaea (Common olive).